The sequence spans 192 residues: U1 small nuclear ribonucleoprotein C (192 aa).

The segment at Y4–E36 adopts a Matrin-type zinc-finger fold. A disordered region spans residues P118–N192. The span at R133–Y154 shows a compositional bias: polar residues. Residues N164 to N173 show a composition bias toward low complexity. The segment covering Y174 to N192 has biased composition (polar residues).

This sequence belongs to the U1 small nuclear ribonucleoprotein C family. U1 snRNP is composed of the 7 core Sm proteins B/B', D1, D2, D3, E, F and G that assemble in a heptameric protein ring on the Sm site of the small nuclear RNA to form the core snRNP, and at least 3 U1 snRNP-specific proteins U1-70K, U1-A and U1-C. U1-C interacts with U1 snRNA and the 5' splice-site region of the pre-mRNA.

It localises to the nucleus. Component of the spliceosomal U1 snRNP, which is essential for recognition of the pre-mRNA 5' splice-site and the subsequent assembly of the spliceosome. U1-C is directly involved in initial 5' splice-site recognition for both constitutive and regulated alternative splicing. The interaction with the 5' splice-site seems to precede base-pairing between the pre-mRNA and the U1 snRNA. Stimulates commitment or early (E) complex formation by stabilizing the base pairing of the 5' end of the U1 snRNA and the 5' splice-site region. This is U1 small nuclear ribonucleoprotein C from Plasmodium chabaudi chabaudi.